The chain runs to 347 residues: P2Y purinoceptor 12 (347 aa).

At 1–33 the chain is on the extracellular side; that stretch reads MDVPGVNTTSANTTFSPGTSTLCVRDYKITQVL. Asn-7 and Asn-12 each carry an N-linked (GlcNAc...) asparagine glycan. 2 disulfides stabilise this stretch: Cys-23-Cys-276 and Cys-103-Cys-181. A helical membrane pass occupies residues 34 to 56; it reads FPLLYTVLFFAGLITNSLAMRIF. Residues 57–67 are Cytoplasmic-facing; that stretch reads FQIRSKSNFII. A phosphoserine mark is found at Ser-61 and Ser-63. Residues 68 to 88 traverse the membrane as a helical segment; it reads FLKNTVISDLLMILTFPFKIL. The Extracellular segment spans residues 89–103; sequence SDAKLGAGPLRTLVC. The ADP site is built by Arg-99, Cys-103, and Tyr-111. The chain crosses the membrane as a helical span at residues 104-124; the sequence is QVTSVTFYFTMYISISFLGLI. At 125-148 the chain is on the cytoplasmic side; that stretch reads TIDRYLKTTRPFKTSSPSNLLGAK. The chain crosses the membrane as a helical span at residues 149-168; sequence ILSVVIWAFMFLISLPNMIL. ADP-binding positions include 162-165, 181-185, His-193, and Asn-197; these read SLPN and CSFLK. The Extracellular portion of the chain corresponds to 169 to 191; the sequence is TNRRPKDKDVTKCSFLKSEFGLV. A helical membrane pass occupies residues 192–213; sequence WHEIVNYICQVIFWINFLIVIV. At 214–239 the chain is on the cytoplasmic side; that stretch reads CYSLITKELYRSYVRTRGSAKVPKKK. Residues 240–265 form a helical membrane-spanning segment; it reads VNVKVFIIIAVFFICFVPFHFARIPY. ADP contacts are provided by residues 262–265, Gln-269, and Lys-286; that span reads RIPY. The Extracellular segment spans residues 266 to 284; the sequence is TLSQTRAVFDCSAENTLFY. The helical transmembrane segment at 285 to 304 threads the bilayer; it reads VKESTLWLTSLNACLDPFIY. The Cytoplasmic portion of the chain corresponds to 305–347; that stretch reads FFLCKSFRNSLTSMLRCSNSTSTSGTNKKKGQEGGEPSEETPM. The segment at 321–347 is disordered; that stretch reads CSNSTSTSGTNKKKGQEGGEPSEETPM.

This sequence belongs to the G-protein coupled receptor 1 family.

The protein localises to the cell membrane. In terms of biological role, receptor for ADP and ATP coupled to G-proteins that inhibit the adenylyl cyclase second messenger system. Required for normal platelet aggregation and blood coagulation. The sequence is that of P2Y purinoceptor 12 (P2ry12) from Mus musculus (Mouse).